The primary structure comprises 508 residues: WD repeat-containing protein DDB_G0290555 (508 aa).

4 WD repeats span residues 32-74 (TSEL…LIGE), 159-198 (NVAT…KTYS), 252-292 (FSKH…QVGS), and 295-334 (DSAG…MLHK). Residues 368-508 (ENKNRINNDD…KKFAGLKKRK (141 aa)) form a disordered region. Residues 399-435 (MDSDDDIEDGDDNDVEFPMEADSDDSDFDLGNSDDDN) show a composition bias toward acidic residues. The segment covering 436 to 446 (ISVKKENKGDS) has biased composition (basic and acidic residues). Positions 447 to 456 (DDSDDDSDED) are enriched in acidic residues. Positions 471 to 493 (NNNNNNNKGKNNKGKNNSSTKKT) are enriched in low complexity. Residues 497–508 (LKKKFAGLKKRK) show a composition bias toward basic residues.

The chain is WD repeat-containing protein DDB_G0290555 from Dictyostelium discoideum (Social amoeba).